The sequence spans 344 residues: GTP 3',8-cyclase (344 aa).

One can recognise a Radical SAM core domain in the interval 19-245 (PFGRAVTYLR…DIPYRTGGPA (227 aa)). R28 is a GTP binding site. [4Fe-4S] cluster is bound by residues C35 and C39. An S-adenosyl-L-methionine-binding site is contributed by Y41. A [4Fe-4S] cluster-binding site is contributed by C42. A GTP-binding site is contributed by R77. G81 is a binding site for S-adenosyl-L-methionine. T111 contacts GTP. S135 lines the S-adenosyl-L-methionine pocket. Residue K171 coordinates GTP. M205 serves as a coordination point for S-adenosyl-L-methionine. [4Fe-4S] cluster is bound by residues C268 and C271. 273 to 275 (RVR) contributes to the GTP binding site. C285 lines the [4Fe-4S] cluster pocket.

Belongs to the radical SAM superfamily. MoaA family. Monomer and homodimer. [4Fe-4S] cluster serves as cofactor.

The catalysed reaction is GTP + AH2 + S-adenosyl-L-methionine = (8S)-3',8-cyclo-7,8-dihydroguanosine 5'-triphosphate + 5'-deoxyadenosine + L-methionine + A + H(+). Its pathway is cofactor biosynthesis; molybdopterin biosynthesis. Functionally, catalyzes the cyclization of GTP to (8S)-3',8-cyclo-7,8-dihydroguanosine 5'-triphosphate. The sequence is that of GTP 3',8-cyclase from Brucella abortus (strain S19).